The chain runs to 496 residues: MIDLKQYEFWFLVGSQYLYGLETLKKVEQQASRIVEALNNDPIFPSKIVLKPVLKNSAEIREIFEKANAEPKCAGVIVWMHTFSPSKMWIRGLSINKKPLLHLHTQYNREIPWDTIDMDYMNLNQSAHGDREHGFIHARMRLPRKVVVGHWEDREVREKIAKWMRVACAIQDGRTGQIVRFGDNMREVASTEGDKVEAQIKLGWSINTWGVGELAERVKAVPENEVEELLKEYKERYIMPEDEYSLKAIREQAKMEIALREFLKEKNAIAFTTTFEDLHDLPQLPGLAVQRLMEEGYGFGAEGDWKAAGLVRALKVMGAGLPGGTSFMEDYTYHLTPGNELVLGAHMLEVCPTIAKEKPRIEVHPLSIGGKADPARLVFDGQEGPAVNASIVDMGNRFRLVVNRVLSVPIERKMPKLPTARVLWKPLPDFKRATTAWILAGGSHHTAFSTAVDVEYLIDWAEALEIEYLVIDENLDLENFKKELRWNELYWGLLKR.

4 residues coordinate Mn(2+): E302, E329, H346, and H445.

Belongs to the arabinose isomerase family. Requires Mn(2+) as cofactor.

It catalyses the reaction beta-L-arabinopyranose = L-ribulose. The protein operates within carbohydrate degradation; L-arabinose degradation via L-ribulose; D-xylulose 5-phosphate from L-arabinose (bacterial route): step 1/3. Catalyzes the conversion of L-arabinose to L-ribulose. This chain is L-arabinose isomerase, found in Thermotoga neapolitana (strain ATCC 49049 / DSM 4359 / NBRC 107923 / NS-E).